The primary structure comprises 218 residues: Copper acquisition factor BIM1 (218 aa).

The signal sequence occupies residues 1–19 (MFALKFILITSFIASTALA). His20 and His65 together coordinate Cu(2+). Intrachain disulfides connect Cys40/Cys144 and Cys110/Cys161. 3 N-linked (GlcNAc...) asparagine glycosylation sites follow: Asn87, Asn91, and Asn124. A Cu(2+)-binding site is contributed by Asp138. Residues Asn158 and Asn170 are each glycosylated (N-linked (GlcNAc...) asparagine). A disordered region spans residues 160–194 (TCTDDASRTSNASSTSSGSATATSAAATSSSSGTS). Residues 167–194 (RTSNASSTSSGSATATSAAATSSSSGTS) show a composition bias toward low complexity. The GPI-anchor amidated serine moiety is linked to residue Ser190. Residues 191–218 (SGTSGAIKEVVGLGALSLALGIAGLIIL) constitute a propeptide, removed in mature form.

This sequence belongs to the X325 family. Requires Cu(2+) as cofactor.

The protein resides in the cell membrane. Functionally, lytic polysaccharide monooxygenase-like protein that has diverged to biological functions other than polysaccharide degradation since it does not perform oxidative cleavage of polysaccharides. Cell surface-bound protein that functions in the copper-accumulation pathway shared by the CUF1-dependent copper transporter CTR1. Involved in maintaining cell wall integrity during copper deficiency. Binds Cu(2+) with an estimated 1:1 stoichiometry and might serve as an extracellular copper ligand. FRE4 and FRE7 metalloreductases probably function together with CTR1 and BIM1 to liberate the Cu(2+) bound to the BIM1 copper-binding site for subsequent import of Cu(+) into the cell by CTR1, via the reduction of BIM1-bound Cu(2+) to Cu(+) to reduce binding affinity for BIM1 but increase affinity for CTR1. Facilitates copper acquisition in the brain of mammalian hosts and acts as a copper-dependent virulence trait in fungal meningitis. While BIM1 plays a critical role in cryptococcal meningitis, at least in part through its role in copper acquisition, it could play additional roles during copper limitation or as a means to invade and colonize host tissues in the brain, by compromising host carbohydrate integrity via its lytic polysaccharide monooxygenase (LPMO) activity, which has still to be determined. The sequence is that of Copper acquisition factor BIM1 from Cryptococcus neoformans var. neoformans serotype D (strain JEC21 / ATCC MYA-565) (Filobasidiella neoformans).